The chain runs to 208 residues: Ras-related protein Rab-6B (208 aa).

GTP contacts are provided by residues 20-27 (GEQSVGKT), T45, 68-72 (DTAGQ), and 126-129 (NKTD). Residues 42-50 (YQATIGIDF) carry the Effector region motif. Residues C206 and C208 are each lipidated (S-geranylgeranyl cysteine). Cysteine methyl ester is present on C208.

The protein belongs to the small GTPase superfamily. Rab family. As to quaternary structure, interacts (GTP-bound) with BICD1 (via C-terminus); the interaction is direct. Interacts (GDP-bound) with DYNLRB1. Interacts (GTP-bound) with APBA1/MINT1. Interacts (GTP-bound) with VPS13B.

It localises to the golgi apparatus membrane. Its subcellular location is the endoplasmic reticulum-Golgi intermediate compartment. It is found in the cytoplasmic vesicle. It catalyses the reaction GTP + H2O = GDP + phosphate + H(+). Regulated by guanine nucleotide exchange factors (GEFs) which promote the exchange of bound GDP for free GTP, GTPase activating proteins (GAPs) which increase the GTP hydrolysis activity, and GDP dissociation inhibitors which inhibit the dissociation of the nucleotide from the GTPase. In terms of biological role, the small GTPases Rab are key regulators of intracellular membrane trafficking, from the formation of transport vesicles to their fusion with membranes. Rabs cycle between active GTP-bound and inactive GDP-bound states. In their active state, drive transport of vesicular carriers from donor organelles to acceptor organelles to regulate the membrane traffic that maintains organelle identity and morphology. Recruits VPS13B to the Golgi membrane. Regulates the compacted morphology of the Golgi. Seems to have a role in retrograde membrane traffic at the level of the Golgi complex. May function in retrograde transport in neuronal cells. Plays a role in neuron projection development. This is Ras-related protein Rab-6B (RAB6B) from Bos taurus (Bovine).